The following is a 249-amino-acid chain: Mediator of RNA polymerase II transcription subunit 19 (249 aa).

Disordered regions lie at residues M1–R68 and Q178–R249. Positions A9–S18 are enriched in low complexity. Residues V45–L56 are compositionally biased toward pro residues. Composition is skewed to basic residues over residues P179–S190 and R221–R233.

Belongs to the Mediator complex subunit 19 family. As to quaternary structure, component of the Mediator complex.

The protein resides in the nucleus. Component of the Mediator complex, a coactivator involved in the regulated transcription of nearly all RNA polymerase II-dependent genes. Mediator functions as a bridge to convey information from gene-specific regulatory proteins to the basal RNA polymerase II transcription machinery. Mediator is recruited to promoters by direct interactions with regulatory proteins and serves as a scaffold for the assembly of a functional preinitiation complex with RNA polymerase II and the general transcription factors. In Xenopus tropicalis (Western clawed frog), this protein is Mediator of RNA polymerase II transcription subunit 19 (med19).